The chain runs to 153 residues: Aspartate carbamoyltransferase regulatory chain (153 aa).

4 residues coordinate Zn(2+): C109, C114, C138, and C141.

The protein belongs to the PyrI family. As to quaternary structure, contains catalytic and regulatory chains. Zn(2+) serves as cofactor.

Functionally, involved in allosteric regulation of aspartate carbamoyltransferase. The sequence is that of Aspartate carbamoyltransferase regulatory chain from Cronobacter sakazakii (strain ATCC BAA-894) (Enterobacter sakazakii).